The following is a 227-amino-acid chain: Cytidylate kinase (227 aa).

Glycine 12–threonine 20 contributes to the ATP binding site.

Belongs to the cytidylate kinase family. Type 1 subfamily.

It is found in the cytoplasm. The enzyme catalyses CMP + ATP = CDP + ADP. It catalyses the reaction dCMP + ATP = dCDP + ADP. This chain is Cytidylate kinase, found in Shewanella denitrificans (strain OS217 / ATCC BAA-1090 / DSM 15013).